The primary structure comprises 1029 residues: Putative guanine nucleotide-exchange factor SED4 (1029 aa).

At 1–344 (MVFDSEYDLG…AMGGSNLWKS (344 aa)) the chain is on the cytoplasmic side. 2 WD repeats span residues 257-296 (KDYK…VIKL) and 300-339 (VHKD…MGGS). The helical; Signal-anchor for type II membrane protein transmembrane segment at 345 to 365 (LLRFLFNVMKLAVVVIWAHLF) threads the bilayer. Topologically, residues 366–1029 (YKYDLHHKLY…TQHNVINDEL (664 aa)) are lumenal. Asn-579 carries N-linked (GlcNAc...) asparagine glycosylation. The segment covering 579 to 592 (NASTSISIEESTNS) has biased composition (low complexity). Disordered regions lie at residues 579 to 673 (NAST…NSIV), 710 to 732 (VVDE…VGSI), and 747 to 821 (EAVK…SQIS). Positions 593–603 (HSTFIESSSSL) are enriched in polar residues. N-linked (GlcNAc...) asparagine glycosylation is present at Asn-608. Basic and acidic residues predominate over residues 613–628 (SSREISSETSIIKEDM). Over residues 633 to 642 (ENVSEQSATD) the composition is skewed to polar residues. Asn-634 and Asn-647 each carry an N-linked (GlcNAc...) asparagine glycan. Positions 643 to 654 (KVNKNQSIDKID) are enriched in basic and acidic residues. The span at 655 to 672 (VSSSSSIPTSSEGSSNSI) shows a compositional bias: low complexity. Residues 712-722 (DENHSESKLPT) are compositionally biased toward basic and acidic residues. 10 N-linked (GlcNAc...) asparagine glycosylation sites follow: Asn-714, Asn-754, Asn-774, Asn-792, Asn-806, Asn-855, Asn-865, Asn-874, Asn-884, and Asn-966. Composition is skewed to polar residues over residues 750-762 (KTSS…SQVT) and 771-782 (RVSNQSLSTVST). The segment covering 783-799 (EHTEMKESSNLTEKKPE) has biased composition (basic and acidic residues). Over residues 800–812 (SNSPESNLSESSL) the composition is skewed to low complexity. The span at 858–867 (LVDSQSSNSS) shows a compositional bias: low complexity. Disordered stretches follow at residues 858–886 (LVDS…QNET), 963–982 (TPEN…FMTE), and 1003–1029 (VAQQ…NDEL). The span at 868–886 (VKTVETNVSQDEQTSQNET) shows a compositional bias: polar residues. The short motif at 1026–1029 (NDEL) is the Prevents secretion from ER element.

This sequence belongs to the WD repeat SEC12 family.

The protein localises to the endoplasmic reticulum membrane. It is found in the golgi apparatus membrane. Functionally, putative guanine nucleotide-exchange factor (GEF) involved in the formation or budding of transport vesicles from the ER. Positive regulator of SAR1 probably through inhibition of the GTPase activation by SEC23. The protein is Putative guanine nucleotide-exchange factor SED4 (SED4) of Candida glabrata (strain ATCC 2001 / BCRC 20586 / JCM 3761 / NBRC 0622 / NRRL Y-65 / CBS 138) (Yeast).